The chain runs to 76 residues: Omega-agatoxin-Aa3a (76 aa).

Cystine bridges form between cysteine 2–cysteine 19, cysteine 9–cysteine 25, cysteine 16–cysteine 52, cysteine 18–cysteine 40, cysteine 27–cysteine 38, and cysteine 59–cysteine 67.

This sequence belongs to the neurotoxin 04 (omega-agtx) family. 03 (type II/III omega-agtx) subfamily. As to expression, expressed by the venom gland.

It localises to the secreted. Omega-agatoxin are antagonist of voltage-gated calcium channels. They block insect neuromuscular transmission presynaptically. Potent blocker of N- (Cav2.2/CACNA1B) and L-type (Cav1/CACNA1) calcium channels. The sequence is that of Omega-agatoxin-Aa3a from Agelenopsis aperta (North American funnel-web spider).